Here is a 340-residue protein sequence, read N- to C-terminus: Probable dual-specificity RNA methyltransferase RlmN (340 aa).

E90 functions as the Proton acceptor in the catalytic mechanism. One can recognise a Radical SAM core domain in the interval 97 to 325 (QVSRKTACLS…PVTRRYQRGN (229 aa)). C104 and C331 are disulfide-bonded. C111, C115, and C118 together coordinate [4Fe-4S] cluster. S-adenosyl-L-methionine contacts are provided by residues 157 to 158 (GE), S189, 212 to 214 (SLT), and N288. Residue C331 is the S-methylcysteine intermediate of the active site.

The protein belongs to the radical SAM superfamily. RlmN family. It depends on [4Fe-4S] cluster as a cofactor.

The protein localises to the cytoplasm. The catalysed reaction is adenosine(2503) in 23S rRNA + 2 reduced [2Fe-2S]-[ferredoxin] + 2 S-adenosyl-L-methionine = 2-methyladenosine(2503) in 23S rRNA + 5'-deoxyadenosine + L-methionine + 2 oxidized [2Fe-2S]-[ferredoxin] + S-adenosyl-L-homocysteine. It carries out the reaction adenosine(37) in tRNA + 2 reduced [2Fe-2S]-[ferredoxin] + 2 S-adenosyl-L-methionine = 2-methyladenosine(37) in tRNA + 5'-deoxyadenosine + L-methionine + 2 oxidized [2Fe-2S]-[ferredoxin] + S-adenosyl-L-homocysteine. Its function is as follows. Specifically methylates position 2 of adenine 2503 in 23S rRNA and position 2 of adenine 37 in tRNAs. This chain is Probable dual-specificity RNA methyltransferase RlmN, found in Treponema pallidum (strain Nichols).